Consider the following 301-residue polypeptide: Probable alpha-L-glutamate ligase 1 (301 aa).

Positions 104–287 (LQLLSRKGIG…VTEPIVEYIE (184 aa)) constitute an ATP-grasp domain. ATP-binding positions include K141, 178 to 179 (EY), D187, and 211 to 213 (RSN). Residues D248, E260, and N262 each coordinate Mg(2+). 3 residues coordinate Mn(2+): D248, E260, and N262.

It belongs to the RimK family. Requires Mg(2+) as cofactor. Mn(2+) serves as cofactor.

The sequence is that of Probable alpha-L-glutamate ligase 1 from Shewanella sp. (strain MR-4).